The sequence spans 552 residues: MTKYVFVTGGVVSSLGKGIAAASLAAILESRGLKVTLLKLDPYINVDPGTMSPFQHGEVFVTEDGAETDLDLGHYERFISTKMRKANNFTTGQIYESVIRKERRGDYLGKTVQVIPHITNEIQAFIERGAASATCGEPDVAIVEIGGTVGDIESLPFLEAARQMSLRLGRNSACFVHLTLVPYVATAGELKTKPTQHSVQKLREIGILPHVLLCRADRRIPDDESKKISMFSNVPEDAVISVWDADSIYKIPQMLHDQGLDRIICEELKLSPKDADLSMWSALVEKLENPKQEVTIGMVGKYVDLTESYKSLIEALRHASIHTSTKVNIEYIDSEELETNGVDSLKHLDAVLVPGGFGRRGTEGKIAAVRYARESKVPYLGICLGMQLAVIEFARDVVGLKQANSTEFDPDTPERVVALITEWYDREGKVETRTEESDLGGTMRLGSQRCPIKPGTMAEEIYGKDVNERHRHRYEVNNRFVPQLEAGGLIISARTPSEDLPEMMELPRSMHPWFVGVQFHPEFTSTPRDGHPLFKSFVEAALANKQARGVQA.

The segment at 1–270 (MTKYVFVTGG…DRIICEELKL (270 aa)) is amidoligase domain. Position 13 (serine 13) interacts with CTP. Serine 13 is a binding site for UTP. ATP is bound by residues 14–19 (SLGKGI) and aspartate 71. Mg(2+) contacts are provided by aspartate 71 and glutamate 144. Residues 151 to 153 (DIE), 191 to 196 (KTKPTQ), and lysine 227 contribute to the CTP site. Residues 191–196 (KTKPTQ) and lysine 227 contribute to the UTP site. The 253-residue stretch at 295–547 (TIGMVGKYVD…VEAALANKQA (253 aa)) folds into the Glutamine amidotransferase type-1 domain. Glycine 356 lines the L-glutamine pocket. Cysteine 383 (nucleophile; for glutamine hydrolysis) is an active-site residue. Residues 384–387 (LGMQ), glutamate 407, and arginine 473 each bind L-glutamine. Catalysis depends on residues histidine 520 and glutamate 522.

It belongs to the CTP synthase family. In terms of assembly, homotetramer.

It carries out the reaction UTP + L-glutamine + ATP + H2O = CTP + L-glutamate + ADP + phosphate + 2 H(+). It catalyses the reaction L-glutamine + H2O = L-glutamate + NH4(+). The enzyme catalyses UTP + NH4(+) + ATP = CTP + ADP + phosphate + 2 H(+). The protein operates within pyrimidine metabolism; CTP biosynthesis via de novo pathway; CTP from UDP: step 2/2. Its activity is regulated as follows. Allosterically activated by GTP, when glutamine is the substrate; GTP has no effect on the reaction when ammonia is the substrate. The allosteric effector GTP functions by stabilizing the protein conformation that binds the tetrahedral intermediate(s) formed during glutamine hydrolysis. Inhibited by the product CTP, via allosteric rather than competitive inhibition. In terms of biological role, catalyzes the ATP-dependent amination of UTP to CTP with either L-glutamine or ammonia as the source of nitrogen. Regulates intracellular CTP levels through interactions with the four ribonucleotide triphosphates. The protein is CTP synthase of Burkholderia cenocepacia (strain ATCC BAA-245 / DSM 16553 / LMG 16656 / NCTC 13227 / J2315 / CF5610) (Burkholderia cepacia (strain J2315)).